A 345-amino-acid polypeptide reads, in one-letter code: Probable G-protein coupled receptor 139 (345 aa).

Over 1–21 (MEHTHAHLAANSSACGLGFVP) the chain is Extracellular. A glycan (N-linked (GlcNAc...) asparagine) is linked at asparagine 11. A helical transmembrane segment spans residues 22–42 (VVYYSFLLCLGLPANILTVII). Topologically, residues 43–57 (LSQLVARRQKSSYNY) are cytoplasmic. A helical transmembrane segment spans residues 58–78 (LLALAAADILVLFFIVFVDFL). At 79-94 (LEDFILTMQMPLIPDK) the chain is on the extracellular side. Residues 95–115 (IIEVLEFSSIHTSIWITVPLT) form a helical membrane-spanning segment. At 116–140 (VDRYIAVCHPLKYHTVSYPARTRKV) the chain is on the cytoplasmic side. The helical transmembrane segment at 141–161 (ILSVYITCFLTSIPYYWWPNI) threads the bilayer. The Extracellular segment spans residues 162–173 (WTEDYISTSMHH). The chain crosses the membrane as a helical span at residues 174–194 (VLVWIHCFTVYLVPCSIFFIL). Residues 195–220 (NSIIVYKLRRKSNFRLRGYSTGKTTA) are Cytoplasmic-facing. The chain crosses the membrane as a helical span at residues 221-241 (ILFTITSIFATLWAPRIIMIL). The Extracellular segment spans residues 242–260 (YHLYGAPIQNPWLVHIMLD). The chain crosses the membrane as a helical span at residues 261 to 281 (VANMLALLNTAINFFLYCFIS). Residues 282-345 (KRFRTMAAAT…KHGKPIKVSP (64 aa)) lie on the Cytoplasmic side of the membrane.

The protein belongs to the G-protein coupled receptor 1 family. Expressed almost exclusively in the brain. Abundantly expressed in the ventrolateral region of caudate putamen, the habenular nucleus, the zona incerta, and the medial mammillary nucleus.

Its subcellular location is the cell membrane. Orphan receptor. Seems to act through a G(q/11)-mediated pathway. The sequence is that of Probable G-protein coupled receptor 139 (Gpr139) from Mus musculus (Mouse).